Reading from the N-terminus, the 325-residue chain is DNA-directed RNA polymerase subunit alpha (325 aa).

The segment at 1 to 231 is alpha N-terminal domain (alpha-NTD); the sequence is MQTSLLKPKI…DQLSVFAALE (231 aa). The interval 246 to 325 is alpha C-terminal domain (alpha-CTD); it reads IDPILLRPVD…ENWPPAGLDK (80 aa).

The protein belongs to the RNA polymerase alpha chain family. Homodimer. The RNAP catalytic core consists of 2 alpha, 1 beta, 1 beta' and 1 omega subunit. When a sigma factor is associated with the core the holoenzyme is formed, which can initiate transcription.

The catalysed reaction is RNA(n) + a ribonucleoside 5'-triphosphate = RNA(n+1) + diphosphate. Its function is as follows. DNA-dependent RNA polymerase catalyzes the transcription of DNA into RNA using the four ribonucleoside triphosphates as substrates. This chain is DNA-directed RNA polymerase subunit alpha, found in Paraburkholderia phytofirmans (strain DSM 17436 / LMG 22146 / PsJN) (Burkholderia phytofirmans).